The following is a 175-amino-acid chain: Bifunctional protein PyrR (175 aa).

Residues 40–41 (TR), 102–110 (DDVLYTGRT), Arg135, and Val159 contribute to the substrate site. Residues 98–110 (VVIIDDVLYTGRT) carry the PRPP-binding motif.

It belongs to the purine/pyrimidine phosphoribosyltransferase family. PyrR subfamily. In terms of assembly, homodimer and homohexamer; in equilibrium.

It catalyses the reaction UMP + diphosphate = 5-phospho-alpha-D-ribose 1-diphosphate + uracil. Functionally, regulates transcriptional attenuation of the pyrimidine nucleotide (pyr) operon by binding in a uridine-dependent manner to specific sites on pyr mRNA. This disrupts an antiterminator hairpin in the RNA and favors formation of a downstream transcription terminator, leading to a reduced expression of downstream genes. In terms of biological role, also displays a weak uracil phosphoribosyltransferase activity which is not physiologically significant. This Staphylococcus epidermidis (strain ATCC 12228 / FDA PCI 1200) protein is Bifunctional protein PyrR.